We begin with the raw amino-acid sequence, 380 residues long: Chaperone protein DnaJ (380 aa).

A J domain is found at 5-70 (DYYEVLGVER…SKRAAYDQYG (66 aa)). The CR-type zinc-finger motif lies at 139 to 217 (GTTVNIRVPT…CHGEGRVEES (79 aa)). Positions 152, 155, 169, 172, 191, 194, 205, and 208 each coordinate Zn(2+). CXXCXGXG motif repeat units lie at residues 152-159 (CKPCDGSG), 169-176 (CPTCGGIG), 191-198 (CPRCHGHG), and 205-212 (CDSCHGEG).

The protein belongs to the DnaJ family. As to quaternary structure, homodimer. The cofactor is Zn(2+).

The protein resides in the cytoplasm. In terms of biological role, participates actively in the response to hyperosmotic and heat shock by preventing the aggregation of stress-denatured proteins and by disaggregating proteins, also in an autonomous, DnaK-independent fashion. Unfolded proteins bind initially to DnaJ; upon interaction with the DnaJ-bound protein, DnaK hydrolyzes its bound ATP, resulting in the formation of a stable complex. GrpE releases ADP from DnaK; ATP binding to DnaK triggers the release of the substrate protein, thus completing the reaction cycle. Several rounds of ATP-dependent interactions between DnaJ, DnaK and GrpE are required for fully efficient folding. Also involved, together with DnaK and GrpE, in the DNA replication of plasmids through activation of initiation proteins. The chain is Chaperone protein DnaJ from Pseudomonas syringae pv. tomato (strain ATCC BAA-871 / DC3000).